The primary structure comprises 460 residues: A-type ATP synthase subunit B (460 aa).

It belongs to the ATPase alpha/beta chains family. Has multiple subunits, A(3), B(3), C, D, E, F, G, I and K(x); there may be a few other subunits as well.

It localises to the cell membrane. In terms of biological role, component of the A-type ATP synthase that produces ATP from ADP in the presence of a proton gradient across the membrane. The B chain is a regulatory subunit. The polypeptide is A-type ATP synthase subunit B (Methanosarcina mazei (strain ATCC BAA-159 / DSM 3647 / Goe1 / Go1 / JCM 11833 / OCM 88) (Methanosarcina frisia)).